A 473-amino-acid chain; its full sequence is MVAHRARRRKRASATQLYRTCKAAGTCPPDVIPKVEGTTLADRILQWGGLGIYLGGLGIGTGSGTGGRTGYVPLSTRPGTVVDVSVPARPPVVIEPVGPSDPSIVNLLEDSSIINSGSTVPTFSGTGGFEVTSSATTTPAVLDITPATDNVVISSSNFTNPAFTEPSLLEVPQNGEVSGHILVSTPTAGTHSYEEIPMETFASPGTGNEPISSTPVPGVSRIAGPRLYAKAVTQVKVTDPAFLSRPTSLVTFDNPAFEPGDETIIFERPYPPSQVPDPDFMDIIRLHRPALTSRRGTVRFSRLGTKLSMHTRSGKGIGARVHYYQDLSPIGPTEDIEMEPLLAPAENAAGDSIYDVFADVEDADIAFTGRSRSATSSRGYTTVSPLSSTLTTKYGNVTIPFVSPVDVHLHPGPDIITPASTQWPFVPLVPADTTHYVYIDGGDFYLWPVTLFVPRRRRRKRLSYFLADGTVAL.

Residues 1–12 (MVAHRARRRKRA) carry the Nuclear localization signal motif. Cys-21 and Cys-27 form a disulfide bridge. Residues 452 to 462 (FVPRRRRRKRL) carry the Nuclear localization signal motif.

This sequence belongs to the papillomaviridae L2 protein family. In terms of assembly, interacts with major capsid protein L1. Interacts with E2; this interaction inhibits E2 transcriptional activity but not the DNA replication function E2. Interacts with host GADD45GIP1. Interacts with host HSPA8; this interaction is required for L2 nuclear translocation. Interacts with host importins KPNB2 and KPNB3. Forms a complex with importin alpha2-beta1 heterodimers via interaction with the importin alpha2 adapter. Interacts with host DYNLT1; this interaction is essential for virus intracellular transport during entry. Interacts (via C-terminus) with host retromer subunits VPS35 and VPS29. Post-translationally, highly phosphorylated.

The protein localises to the virion. It is found in the host nucleus. It localises to the host early endosome. The protein resides in the host Golgi apparatus. Minor protein of the capsid that localizes along the inner surface of the virion, within the central cavities beneath the L1 pentamers. Plays a role in capsid stabilization through interaction with the major capsid protein L1. Once the virion enters the host cell, L2 escorts the genomic DNA into the nucleus by promoting escape from the endosomal compartments and traffic through the host Golgi network. Mechanistically, the C-terminus of L2 possesses a cell-penetrating peptide that protudes from the host endosome, interacts with host cytoplasmic retromer cargo and thereby mediates the capsid delivery to the host trans-Golgi network. Plays a role through its interaction with host dynein in the intracellular microtubule-dependent transport of viral capsid toward the nucleus. Mediates the viral genome import into the nucleus through binding to host importins. Once within the nucleus, L2 localizes viral genomes to host PML bodies in order to activate early gene expression for establishment of infection. Later on, promotes late gene expression by interacting with the viral E2 protein and by inhibiting its transcriptional activation functions. During virion assembly, encapsidates the genome by direct interaction with the viral DNA. The chain is Minor capsid protein L2 from Human papillomavirus 28.